The sequence spans 590 residues: Kinetochore protein ndc-80 (590 aa).

Coiled coils occupy residues 269 to 342 and 450 to 525; these read KGNE…KQIH and ELET…MKLD.

It belongs to the NDC80/HEC1 family. In terms of assembly, component of the NDC80 complex, which is composed of at least ndc-80 and him-10. The NDC80 complex interacts with knl-1. Interacts with the RZZ complex components rod-1 (via N-terminus) and zwl-1.

Its subcellular location is the nucleus. The protein resides in the chromosome. It is found in the centromere. The protein localises to the kinetochore. It localises to the cytoplasm. Its subcellular location is the cytoskeleton. In terms of biological role, acts as a component of the essential kinetochore-associated ndc-80 complex, which is required for chromosome segregation in mitosis and meiosis and spindle checkpoint activity. Plays a role in kinetochore assembly and recruits the checkpoint protein mdf-2 and the spindly-like protein spdl-1 to unattached kinetochores. Mediates the formation of end-on kinetochore-microtubule attachments through recruitment of spdl-1. The ndc-80 complex synergistically enhances the affinity of the ska-1 complex for microtubules and may allow the ndc-80 complex to track depolymerizing microtubules. In Caenorhabditis elegans, this protein is Kinetochore protein ndc-80 (ndc-80).